Reading from the N-terminus, the 216-residue chain is MOB kinase activator 3B (216 aa).

Zn(2+)-binding residues include C82, C87, H164, and H169.

The protein belongs to the MOB1/phocein family.

Functionally, modulates LATS1 expression in the Hippo signaling pathway which plays a pivotal role in organ size control and tumor suppression by restricting proliferation and promoting apoptosis. The chain is MOB kinase activator 3B from Homo sapiens (Human).